Consider the following 333-residue polypeptide: HTH-type transcriptional repressor PurR (333 aa).

Residues A2 to C56 form the HTH lacI-type domain. A DNA-binding region (H-T-H motif) is located at residues I4–N23. Residues S48–C56 mediate DNA binding. The hypoxanthine site is built by F73, K189, T191, F220, and D274.

Homodimer.

The protein operates within purine metabolism; purine nucleotide biosynthesis [regulation]. In terms of biological role, is the main repressor of the genes involved in the de novo synthesis of purine nucleotides, regulating purB, purC, purEK, purF, purHD, purL, purMN and guaBA expression. PurR is allosterically activated to bind its cognate DNA by binding the purine corepressors, hypoxanthine or guanine, thereby effecting transcription repression. This Aliivibrio salmonicida (strain LFI1238) (Vibrio salmonicida (strain LFI1238)) protein is HTH-type transcriptional repressor PurR.